The chain runs to 498 residues: Thiamine transporter 1 (498 aa).

The residue at position 1 (Met-1) is an N-acetylmethionine. Over 1–28 (MDVPARVSRRAAAAAARMLLRTARVPRE) the chain is Cytoplasmic. A helical transmembrane segment spans residues 29 to 46 (CWFLPTALLCAYGFFANL). Residues 47-71 (RPSEPFLTPYLLGPDKNLTERQVYN) are Extracellular-facing. Asn-63 carries an N-linked (GlcNAc...) asparagine glycan. The chain crosses the membrane as a helical span at residues 72 to 92 (EIYPVWTYSYLLLLFPVFLAT). The Cytoplasmic portion of the chain corresponds to 93 to 105 (DYLRYKPVILLQG). Residues 106–126 (LSLIVTWFMLLYAQGLLAIQF) form a helical membrane-spanning segment. At 127 to 128 (LE) the chain is on the extracellular side. A helical transmembrane segment spans residues 129–149 (FFYGIATATEIAYYSYIYTVV). Topologically, residues 150–164 (DLGMYQKVTSYCRSA) are cytoplasmic. A helical transmembrane segment spans residues 165-185 (TLVGFTVGSVLGQILVSVVGW). Ser-186 is a topological domain (extracellular). The helical transmembrane segment at 187–207 (LFSLNVISLTCVSVAFAVAWF) threads the bilayer. Topologically, residues 208–295 (LPMPQKSLFF…DFLMCYSSRP (88 aa)) are cytoplasmic. Ser-222 is subject to Phosphoserine. The chain crosses the membrane as a helical span at residues 296–316 (LLCWSVWWALSTCGYFQVVNY). Over 317 to 334 (AQGLWEKVMPSQNADIYN) the chain is Extracellular. Residues 335 to 355 (GGVEAVSTLLGASAVFAVGYI) form a helical membrane-spanning segment. Over 356-360 (KLSWS) the chain is Cytoplasmic. A helical membrane pass occupies residues 361–381 (TWGEMTLFLCSLLIAAAVYVM). The Extracellular portion of the chain corresponds to 382 to 386 (DTVQS). The helical transmembrane segment at 387–407 (IWVCYASYVVFRIIYMVLITI) threads the bilayer. Residues 408-423 (ATFQIAANLSMERYAL) lie on the Cytoplasmic side of the membrane. A helical transmembrane segment spans residues 424–444 (VFGVNTFIALALQTLLTLIVV). Topologically, residues 445–456 (DARGLGLCITTQ) are extracellular. A helical membrane pass occupies residues 457–477 (FLIYASYFAAISVVFLANGIV). Residues 478 to 498 (SIIKKCRKQEDPSSSPQASTS) lie on the Cytoplasmic side of the membrane.

This sequence belongs to the reduced folate carrier (RFC) transporter (TC 2.A.48) family. Interacts with TSPAN1; this interaction increases the stability of SLC19A2. Interacts with TMEM63B. As to expression, expressed in liver. Expressed in cochlear hair cells and duodenum (at protein level). Detected in pancreatic acinar cells (at protein level). Also expressed strongly in pancreatic islet cells. Expressed in the testis. Very highly expressed in liver, and also detected at lower levels in heart, testis, kidney, brain and spleen. In terms of tissue distribution, expressed at low levels in liver and spleen.

It localises to the cell membrane. The catalysed reaction is thiamine(out) + H(+)(in) = thiamine(in) + H(+)(out). It catalyses the reaction pyridoxine(out) + n H(+)(out) = pyridoxine(in) + n H(+)(in). Functionally, high-affinity transporter for the intake of thiamine. Essential for spermatogenesis. Mediates H(+)-dependent pyridoxine transport. In Mus musculus (Mouse), this protein is Thiamine transporter 1.